Here is a 424-residue protein sequence, read N- to C-terminus: Light-independent protochlorophyllide reductase subunit N (424 aa).

[4Fe-4S] cluster contacts are provided by Cys-16, Cys-41, and Cys-102.

Belongs to the BchN/ChlN family. Protochlorophyllide reductase is composed of three subunits; ChlL, ChlN and ChlB. Forms a heterotetramer of two ChlB and two ChlN subunits. [4Fe-4S] cluster serves as cofactor.

It carries out the reaction chlorophyllide a + oxidized 2[4Fe-4S]-[ferredoxin] + 2 ADP + 2 phosphate = protochlorophyllide a + reduced 2[4Fe-4S]-[ferredoxin] + 2 ATP + 2 H2O. It participates in porphyrin-containing compound metabolism; chlorophyll biosynthesis (light-independent). Its function is as follows. Component of the dark-operative protochlorophyllide reductase (DPOR) that uses Mg-ATP and reduced ferredoxin to reduce ring D of protochlorophyllide (Pchlide) to form chlorophyllide a (Chlide). This reaction is light-independent. The NB-protein (ChlN-ChlB) is the catalytic component of the complex. This is Light-independent protochlorophyllide reductase subunit N from Synechococcus sp. (strain WH7803).